A 107-amino-acid polypeptide reads, in one-letter code: Serine-rich and transmembrane domain-containing protein 1 (107 aa).

Residues 43-63 (IYVSIFLSLLAFLLLLLIIAL) form a helical membrane-spanning segment.

It is found in the membrane. The chain is Serine-rich and transmembrane domain-containing protein 1 (Sertm1) from Mus musculus (Mouse).